The chain runs to 222 residues: MKFFIDTANLEDIKKAYKLGVLAGVTTNPSLVAKEGIKFEDRIAEICQAVPKVESVSAEVTPDAVTAEEMIAQAEELIKINGGDEKVTIKLPMTLAGLEACRYLTEKGVKTNVTLIFTVNQALLAARAGATYVSPFLGRLDDISEDGVLLVAKIAELFDVHQLDTQIIAASVRHPDHVTRVAMAGAHIATIPYKVIEQLAMHPLTDQGIEKFAADWAKAPKL.

Catalysis depends on Lys90, which acts as the Schiff-base intermediate with substrate.

The protein belongs to the transaldolase family. Type 3B subfamily.

The protein localises to the cytoplasm. It catalyses the reaction D-sedoheptulose 7-phosphate + D-glyceraldehyde 3-phosphate = D-erythrose 4-phosphate + beta-D-fructose 6-phosphate. Its pathway is carbohydrate degradation; pentose phosphate pathway; D-glyceraldehyde 3-phosphate and beta-D-fructose 6-phosphate from D-ribose 5-phosphate and D-xylulose 5-phosphate (non-oxidative stage): step 2/3. In terms of biological role, transaldolase is important for the balance of metabolites in the pentose-phosphate pathway. The protein is Probable transaldolase 2 of Bacillus anthracis.